A 201-amino-acid polypeptide reads, in one-letter code: Akirin-2 (201 aa).

A phosphoserine mark is found at serine 18 and serine 21. Residues 23–28 (KRRRCA) carry the Nuclear localization signal motif. Residue serine 55 is modified to Phosphoserine. The SYVS motif motif lies at 198-201 (SYVS).

It belongs to the akirin family. In terms of assembly, homodimer. Interacts with IPO9; the interaction is direct. Associates with 20S and 26S proteasomes. Interacts with SMARCD1; promoting SWI/SNF complex recruitment. Interacts with NFKBIZ. Interacts with YWHAB. Polyubiquitinated. Polyubiquitination is dependent of UBR5 that extends pre-ubiquitinated AKIRIN2.

It localises to the nucleus. It is found in the cytoplasm. The protein localises to the membrane. Molecular adapter that acts as a bridge between a variety of multiprotein complexes, and which is involved in embryonic development, immunity, myogenesis and brain development. Plays a key role in nuclear protein degradation by promoting import of proteasomes into the nucleus: directly binds to fully assembled 20S proteasomes at one end and to nuclear import receptor IPO9 at the other end, bridging them together and mediating the import of pre-assembled proteasome complexes through the nuclear pore. Involved in innate immunity by regulating the production of interleukin-6 (IL6) downstream of Toll-like receptor (TLR): acts by bridging the NF-kappa-B inhibitor NFKBIZ and the SWI/SNF complex, leading to promote induction of IL6. Also involved in adaptive immunity by promoting B-cell activation. Involved in brain development: required for the survival and proliferation of cerebral cortical progenitor cells. Involved in myogenesis: required for skeletal muscle formation and skeletal development, possibly by regulating expression of muscle differentiation factors. Also plays a role in facilitating interdigital tissue regression during limb development. In Mus musculus (Mouse), this protein is Akirin-2.